Consider the following 621-residue polypeptide: uncharacterized protein (621 aa).

Disordered stretches follow at residues 92-134 (FRNS…QINQ) and 268-310 (KINH…DDEI). Positions 94 to 134 (NSSNQSSQSNQVNQSNQSSPSSQISPSSQVNKFNQSSQINQ) are enriched in low complexity. The span at 296 to 310 (TNDETNDETDNDDEI) shows a compositional bias: acidic residues. A coiled-coil region spans residues 354–401 (ANKIQNKIIQIVETLNAYKNKQSQIAIEAKNKIKHITVSNKEVSENIE).

This is an uncharacterized protein from Acanthamoeba polyphaga mimivirus (APMV).